A 234-amino-acid polypeptide reads, in one-letter code: Thymidine kinase, cytosolic (234 aa).

N-acetylserine is present on serine 2. Residues serine 2 and serine 13 each carry the phosphoserine modification. Residues 26–33 (GPMFSGKS), 58–60 (DTR), and 97–100 (DEGQ) each bind ATP. Catalysis depends on glutamate 98, which acts as the Proton acceptor. Residue phenylalanine 128 coordinates substrate. Positions 153 and 156 each coordinate Zn(2+). Substrate-binding positions include 172-176 (VEVIG) and tyrosine 181. The Zn(2+) site is built by cysteine 185 and cysteine 188. A KEN box motif is present at residues 203–205 (KEN). A Phosphoserine modification is found at serine 231.

It belongs to the thymidine kinase family. As to quaternary structure, homotetramer. Tetramerization from dimerization is induced by ATP and increases catalytic efficiency due to a high affinity for thymidine. Tetramerization is inhibited by phosphorylation at Ser-13. Interacts (via the KEN box) with FZR1. Phosphorylated on Ser-13 in mitosis. Phosphorylation of Ser-13 by CDK1 during mitosis reduces homotetramerization and catalytic efficiency when DNA replication is complete and intracellular TK1 is still present at a high level. In terms of processing, polyubiquitinated. Postmitosis, ubiquitination leads to proteasomal degradation. The KEN box sequence located at the C-terminal region targets for degradation by the anaphase promoting complex (APC/C) activated and rate-limited by FZR1.

It is found in the cytoplasm. It carries out the reaction thymidine + ATP = dTMP + ADP + H(+). Cell-cycle-regulated enzyme of importance in nucleotide metabolism. Catalyzes the first enzymatic step in the salvage pathway converting thymidine into thymidine monophosphate. Transcriptional regulation limits expression to the S phase of the cell cycle and transient expression coincides with the oscillation in the intracellular dTTP concentration. Also important for the activation of anticancer and antiviral nucleoside analog prodrugs such as 1-b-d-arabinofuranosylcytosine (AraC) and 3c-azido-3c-deoxythymidine (AZT). This is Thymidine kinase, cytosolic from Homo sapiens (Human).